The following is a 914-amino-acid chain: Solute carrier family 12 member 9 (914 aa).

Over 1 to 36 (MASESSPLLAYRLLGEEGAAFPPNGAGVSGVPSSRK) the chain is Cytoplasmic. Residue S6 is modified to Phosphoserine. A helical membrane pass occupies residues 37–57 (LSTFLGVVVPTVLSMFSIVVF). At 58–72 (LRIGFVVGHAGLLQA) the chain is on the extracellular side. The chain crosses the membrane as a helical span at residues 73-93 (LAMLLVAYIILALTVLSVCAI). The Cytoplasmic portion of the chain corresponds to 94–119 (ATNGAVRGGGAYFMISRTLGPEVGGS). Residues 120–140 (IGLMFYLANVCGCAVSLLGLV) form a helical membrane-spanning segment. Residues 141 to 167 (ESILDVFGADATGSSGIQVLPQGYGWN) lie on the Extracellular side of the membrane. Residues 168–188 (LLYGSLLLGLVGGVCTLGAGL) traverse the membrane as a helical segment. Over 189-193 (YARAS) the chain is Cytoplasmic. Residues 194 to 214 (FLTFLLVSGSLASVLVSFVAV) form a helical membrane-spanning segment. Residues 215–262 (GPRNIPLAPRPGTNASSVPHRHGHFTGFNGSTLRDNLGAGYAEDYTTG) are Extracellular-facing. 2 N-linked (GlcNAc...) asparagine glycosylation sites follow: N228 and N243. A helical membrane pass occupies residues 263-283 (AMMTFASVFAVLFNGCTGIMA). The Cytoplasmic segment spans residues 284–297 (GANMSGELKDPSRA). A helical membrane pass occupies residues 298–318 (IPLGTIIAVAYTFFIYILLFF). Residues 319–338 (LSSFTCDRALLQEDYGFFRD) lie on the Extracellular side of the membrane. The helical transmembrane segment at 339-359 (ISLWPPLVLIGIYATALSASM) threads the bilayer. Topologically, residues 360–376 (SSLIGASRILHALAQDD) are cytoplasmic. Residues 377-399 (LFGVILAPAKVVSGGGNPWGAVL) form a helical membrane-spanning segment. Over 400 to 416 (YSWGLVQLVLLAGKLNT) the chain is Extracellular. Residues 417-437 (LAAVVTVFYLVAYAAVDLSCL) traverse the membrane as a helical segment. The Cytoplasmic portion of the chain corresponds to 438 to 466 (SLEWASAPNFRPTFSLFSWHTCLLGVASC). A helical transmembrane segment spans residues 467–487 (LLMMFLISPGAAGGSLLLMGL). Topologically, residues 488-740 (LSALLTARGG…LLRPRGGPGY (253 aa)) are extracellular. Positions 645 to 678 (PAFSEPAEGTREGGSPALSTLFPPPRAPGSPRAL) are disordered. The helical transmembrane segment at 741–761 (VDVCGLFLLQMATILSMVPAW) threads the bilayer. Residues 762-914 (HSARLRIFLC…GVTPVTCTDL (153 aa)) lie on the Cytoplasmic side of the membrane. The segment at 844–864 (QGRGTVGGPGGPEGRDGEEGP) is disordered.

The protein belongs to the SLC12A transporter family. As to quaternary structure, interacts with SLC12A1.

It localises to the cell membrane. Its subcellular location is the lysosome membrane. Functionally, may be an inhibitor of SLC12A1. Seems to correspond to a subunit of a multimeric transport system and thus, additional subunits may be required for its function. May play a role in lysosomal ion flux and osmoregulation. The sequence is that of Solute carrier family 12 member 9 (Slc12a9) from Mus musculus (Mouse).